The primary structure comprises 49 residues: Feruloyl esterase A (49 aa).

This sequence belongs to the AB hydrolase superfamily. FaeA family.

The protein resides in the secreted. It carries out the reaction feruloyl-polysaccharide + H2O = ferulate + polysaccharide.. Involved in degradation of plant cell walls. Hydrolyzes the feruloyl-arabinose ester bond in arabinoxylans as well as the feruloyl-galactose and feruloyl-arabinose ester bonds in pectin. Active against methyl esters of sinapate (MSA), but not caffeate (MCA). The protein is Feruloyl esterase A of Talaromyces stipitatus (strain ATCC 10500 / CBS 375.48 / QM 6759 / NRRL 1006) (Penicillium stipitatum).